The primary structure comprises 351 residues: uncharacterized protein (351 aa).

Positions 215, 226, 290, 319, and 333 each coordinate Mn(2+).

It belongs to the peptidase M24B family. Mn(2+) is required as a cofactor.

This is an uncharacterized protein from Staphylococcus aureus (strain bovine RF122 / ET3-1).